The sequence spans 260 residues: ATP synthase subunit a (260 aa).

5 consecutive transmembrane segments (helical) span residues 27–47 (FWTV…LFIW), 90–110 (IAPL…MDLI), 132–154 (SADV…YYSI), 208–228 (LIFI…LSVP), and 230–250 (AIFH…LTIV).

This sequence belongs to the ATPase A chain family. In terms of assembly, F-type ATPases have 2 components, CF(1) - the catalytic core - and CF(0) - the membrane proton channel. CF(1) has five subunits: alpha(3), beta(3), gamma(1), delta(1), epsilon(1). CF(0) has three main subunits: a(1), b(2) and c(9-12). The alpha and beta chains form an alternating ring which encloses part of the gamma chain. CF(1) is attached to CF(0) by a central stalk formed by the gamma and epsilon chains, while a peripheral stalk is formed by the delta and b chains.

It localises to the cell inner membrane. In terms of biological role, key component of the proton channel; it plays a direct role in the translocation of protons across the membrane. The chain is ATP synthase subunit a from Aeromonas hydrophila subsp. hydrophila (strain ATCC 7966 / DSM 30187 / BCRC 13018 / CCUG 14551 / JCM 1027 / KCTC 2358 / NCIMB 9240 / NCTC 8049).